The sequence spans 465 residues: Pre-mRNA-splicing factor URN1 (465 aa).

The WW domain occupies 1-32 (MRGEWQEFKTPAGKKYYYNKNTKQSRWEKPNL). 3 disordered regions span residues 28 to 49 (EKPN…QTER), 144 to 198 (ERKD…VNQD), and 266 to 288 (ERSG…DSEV). A Phosphoserine modification is found at serine 150. Over residues 160–175 (LQESHTGLVSGYGSSS) the composition is skewed to polar residues. Over residues 176–192 (GEEDEEEDEEEDEENEE) the composition is skewed to acidic residues. The FF domain occupies 212-266 (DIDERNIFFELFDRYKLDKFSTWSLQSKKIENDPDFYKIRDDTVRESLFEEWCGE). A compositionally biased stretch (acidic residues) spans 274-288 (EESDSEDNSEDDSEV).

As to quaternary structure, component of the precatalytic spliceosomal complex B. Interacts with PRP19.

Its subcellular location is the nucleus. Functionally, component of the spliceosome involved in mRNA processing. The protein is Pre-mRNA-splicing factor URN1 (URN1) of Saccharomyces cerevisiae (strain ATCC 204508 / S288c) (Baker's yeast).